A 783-amino-acid chain; its full sequence is uncharacterized protein (783 aa).

Positions 1-22 (MVNTRGYTTLPNVEEPANNSQD) are disordered. The Cytoplasmic portion of the chain corresponds to 1–109 (MVNTRGYTTL…SKIGNVMVMR (109 aa)). A helical; Signal-anchor for type II membrane protein membrane pass occupies residues 110–127 (RIFYIMMMSIIAALIIAS). At 128-783 (DRLPNGKARG…NLHGINTNEF (656 aa)) the chain is on the extracellular side. 2 N-linked (GlcNAc...) asparagine glycosylation sites follow: N139 and N213. The PA domain maps to 241–333 (HNGQLNNIPV…GTGDALTPEW (93 aa)). The N-linked (GlcNAc...) asparagine glycan is linked to N529.

Its subcellular location is the cell membrane. This is an uncharacterized protein from Saccharomyces cerevisiae (strain ATCC 204508 / S288c) (Baker's yeast).